A 258-amino-acid polypeptide reads, in one-letter code: 2-oxo-tetronate isomerase (258 aa).

The active-site Proton donor/acceptor is the Glu-143. Positions 143, 178, 204, and 240 each coordinate Mg(2+). Catalysis depends on Glu-240, which acts as the Proton donor/acceptor.

It belongs to the hyi family. OtnI subfamily.

It carries out the reaction 2-dehydro-L-erythronate = 3-dehydro-L-erythronate. The catalysed reaction is 2-dehydro-D-erythronate = 3-dehydro-D-erythronate. Catalyzes the isomerization of 2-oxo-tetronate to 3-oxo-tetronate. The sequence is that of 2-oxo-tetronate isomerase from Haemophilus influenzae (strain ATCC 51907 / DSM 11121 / KW20 / Rd).